A 285-amino-acid chain; its full sequence is Formamidopyrimidine-DNA glycosylase (285 aa).

Proline 2 functions as the Schiff-base intermediate with DNA in the catalytic mechanism. Glutamate 3 (proton donor) is an active-site residue. Catalysis depends on lysine 61, which acts as the Proton donor; for beta-elimination activity. Positions 102, 121, and 163 each coordinate DNA. Residues asparagine 249 to lysine 283 form an FPG-type zinc finger. The active-site Proton donor; for delta-elimination activity is the arginine 273.

The protein belongs to the FPG family. As to quaternary structure, monomer. It depends on Zn(2+) as a cofactor.

The catalysed reaction is Hydrolysis of DNA containing ring-opened 7-methylguanine residues, releasing 2,6-diamino-4-hydroxy-5-(N-methyl)formamidopyrimidine.. The enzyme catalyses 2'-deoxyribonucleotide-(2'-deoxyribose 5'-phosphate)-2'-deoxyribonucleotide-DNA = a 3'-end 2'-deoxyribonucleotide-(2,3-dehydro-2,3-deoxyribose 5'-phosphate)-DNA + a 5'-end 5'-phospho-2'-deoxyribonucleoside-DNA + H(+). In terms of biological role, involved in base excision repair of DNA damaged by oxidation or by mutagenic agents. Acts as a DNA glycosylase that recognizes and removes damaged bases. Has a preference for oxidized purines, such as 7,8-dihydro-8-oxoguanine (8-oxoG). Has AP (apurinic/apyrimidinic) lyase activity and introduces nicks in the DNA strand. Cleaves the DNA backbone by beta-delta elimination to generate a single-strand break at the site of the removed base with both 3'- and 5'-phosphates. The polypeptide is Formamidopyrimidine-DNA glycosylase (Corynebacterium efficiens (strain DSM 44549 / YS-314 / AJ 12310 / JCM 11189 / NBRC 100395)).